A 76-amino-acid polypeptide reads, in one-letter code: UPF0291 protein BA_1897/GBAA_1897/BAS1759 (76 aa).

This sequence belongs to the UPF0291 family.

Its subcellular location is the cytoplasm. This is UPF0291 protein BA_1897/GBAA_1897/BAS1759 from Bacillus anthracis.